The primary structure comprises 509 residues: Cytochrome P450 monooxygenase alt3 (509 aa).

A helical membrane pass occupies residues 25-45 (IITGIIVLPVLYVLLKVIYNL). C450 is a binding site for heme.

This sequence belongs to the cytochrome P450 family. It depends on heme as a cofactor.

It is found in the membrane. Its pathway is secondary metabolite biosynthesis. Functionally, cytochrome P450 monooxygenase; part of the gene cluster that mediates the biosynthesis of alternapyrone derivatives. Alternapyrone is a decaketide with octa-methylation from methionine on every C2 unit except the third unit. All the domains in the polyketide synthase alt5 are apparently involved in alternapyrone synthesis, that is, the 8 CMeT, 7 KR, 7 DH, and 4 ER reactions in the 9 KS-mediated condensation steps required for alternapyrone synthesis. the alternapyrone produced by alt5 might be intensively modified by cytochrome P450 monooxygenases alt1, alt2 and alt3 and FAD-dependent oxidoreductase alt4 present in the alt gene cluster. The sequence is that of Cytochrome P450 monooxygenase alt3 from Alternaria solani.